The primary structure comprises 255 residues: Taurine import ATP-binding protein TauB (255 aa).

An ABC transporter domain is found at 2-229 (LNVSGLWAEY…RYAEGEPCRA (228 aa)). 34-41 (GPSGCGKT) contacts ATP.

This sequence belongs to the ABC transporter superfamily. Taurine importer (TC 3.A.1.17.1) family. As to quaternary structure, the complex is composed of two ATP-binding proteins (TauB), two transmembrane proteins (TauC) and a solute-binding protein (TauA).

The protein resides in the cell inner membrane. The catalysed reaction is taurine(out) + ATP + H2O = taurine(in) + ADP + phosphate + H(+). Its function is as follows. Part of the ABC transporter complex TauABC involved in taurine import. Responsible for energy coupling to the transport system. This Yersinia pestis bv. Antiqua (strain Antiqua) protein is Taurine import ATP-binding protein TauB.